The chain runs to 150 residues: Ribonuclease pancreatic delta-type (150 aa).

Residues 1-25 (MGLEKSFILFSLLVLVLGWVQPSLG) form the signal peptide. Substrate is bound at residue Arg-35. Catalysis depends on His-37, which acts as the Proton acceptor. Intrachain disulfides connect Cys-51–Cys-110, Cys-65–Cys-121, Cys-83–Cys-136, and Cys-90–Cys-98. Residues 66–70 (KRVNT), Lys-91, and Arg-111 each bind substrate. Residue His-145 is the Proton donor of the active site.

Belongs to the pancreatic ribonuclease family. In terms of assembly, monomer.

The protein resides in the secreted. It carries out the reaction an [RNA] containing cytidine + H2O = an [RNA]-3'-cytidine-3'-phosphate + a 5'-hydroxy-ribonucleotide-3'-[RNA].. It catalyses the reaction an [RNA] containing uridine + H2O = an [RNA]-3'-uridine-3'-phosphate + a 5'-hydroxy-ribonucleotide-3'-[RNA].. Endonuclease that catalyzes the cleavage of RNA on the 3' side of pyrimidine nucleotides. Acts on single-stranded and double-stranded RNA. The sequence is that of Ribonuclease pancreatic delta-type (Rnase1d) from Rattus norvegicus (Rat).